The following is a 106-amino-acid chain: Immunoglobulin lambda constant 2 (106 aa).

Positions 7–101 constitute an Ig-like domain; the sequence is PSVTLFPPSS…EGSTVEKTVA (95 aa). Cys-28 and Cys-87 are oxidised to a cystine.

As to quaternary structure, immunoglobulins are composed of two identical heavy chains and two identical light chains; disulfide-linked.

Its subcellular location is the secreted. It localises to the cell membrane. Its function is as follows. Constant region of immunoglobulin light chains. Immunoglobulins, also known as antibodies, are membrane-bound or secreted glycoproteins produced by B lymphocytes. In the recognition phase of humoral immunity, the membrane-bound immunoglobulins serve as receptors which, upon binding of a specific antigen, trigger the clonal expansion and differentiation of B lymphocytes into immunoglobulins-secreting plasma cells. Secreted immunoglobulins mediate the effector phase of humoral immunity, which results in the elimination of bound antigens. The antigen binding site is formed by the variable domain of one heavy chain, together with that of its associated light chain. Thus, each immunoglobulin has two antigen binding sites with remarkable affinity for a particular antigen. The variable domains are assembled by a process called V-(D)-J rearrangement and can then be subjected to somatic hypermutations which, after exposure to antigen and selection, allow affinity maturation for a particular antigen. This is Immunoglobulin lambda constant 2 from Homo sapiens (Human).